The primary structure comprises 640 residues: Threonine--tRNA ligase (640 aa).

The TGS domain maps to methionine 1–threonine 61. A catalytic region spans residues aspartate 242 to proline 533. Zn(2+) is bound by residues cysteine 333, histidine 384, and histidine 510.

The protein belongs to the class-II aminoacyl-tRNA synthetase family. Homodimer. Zn(2+) is required as a cofactor.

The protein localises to the cytoplasm. The enzyme catalyses tRNA(Thr) + L-threonine + ATP = L-threonyl-tRNA(Thr) + AMP + diphosphate + H(+). Functionally, catalyzes the attachment of threonine to tRNA(Thr) in a two-step reaction: L-threonine is first activated by ATP to form Thr-AMP and then transferred to the acceptor end of tRNA(Thr). Also edits incorrectly charged L-seryl-tRNA(Thr). The sequence is that of Threonine--tRNA ligase from Pseudomonas putida (strain ATCC 700007 / DSM 6899 / JCM 31910 / BCRC 17059 / LMG 24140 / F1).